Reading from the N-terminus, the 486-residue chain is ATP synthase subunit beta 2 (486 aa).

Residue 166–173 (GGAGVGKT) coordinates ATP.

This sequence belongs to the ATPase alpha/beta chains family. F-type ATPases have 2 components, CF(1) - the catalytic core - and CF(0) - the membrane proton channel. CF(1) has five subunits: alpha(3), beta(3), gamma(1), delta(1), epsilon(1). CF(0) has three main subunits: a(1), b(2) and c(9-12). The alpha and beta chains form an alternating ring which encloses part of the gamma chain. CF(1) is attached to CF(0) by a central stalk formed by the gamma and epsilon chains, while a peripheral stalk is formed by the delta and b chains.

Its subcellular location is the cell inner membrane. It carries out the reaction ATP + H2O + 4 H(+)(in) = ADP + phosphate + 5 H(+)(out). Its function is as follows. Produces ATP from ADP in the presence of a proton gradient across the membrane. The catalytic sites are hosted primarily by the beta subunits. This Gluconobacter oxydans (strain 621H) (Gluconobacter suboxydans) protein is ATP synthase subunit beta 2.